The sequence spans 662 residues: Calcium-dependent protease (662 aa).

The region spanning 196 to 529 is the Peptidase S8 domain; the sequence is QWHLKQTTIG…YGRINALKAV (334 aa). Active-site charge relay system residues include Asp233, His270, and Ser466. Residues 535–662 enclose the P/Homo B domain; it reads AQPEPVSIFT…IRSLTIELGF (128 aa).

It belongs to the peptidase S8 family.

Its subcellular location is the cytoplasm. Functionally, degrades phycobiliproteins in vitro. Has a substrate specificity similar to that of trypsin. The sequence is that of Calcium-dependent protease (prcA) from Trichormus variabilis (strain ATCC 29413 / PCC 7937) (Anabaena variabilis).